The sequence spans 620 residues: Chaperone protein HscA homolog (620 aa).

The protein belongs to the heat shock protein 70 family.

Chaperone involved in the maturation of iron-sulfur cluster-containing proteins. Has a low intrinsic ATPase activity which is markedly stimulated by HscB. The protein is Chaperone protein HscA homolog of Shewanella sp. (strain MR-4).